A 384-amino-acid chain; its full sequence is FAD-dependent urate hydroxylase (384 aa).

Residues G11, 30–31 (EA), S43, and V125 each bind FAD. Substrate is bound by residues N178, R204, and 216–218 (YFF). FAD is bound by residues D285 and 295 to 299 (GQGGC).

This sequence belongs to the FAD-dependent urate hydroxylase family. FAD is required as a cofactor.

It carries out the reaction urate + NADH + O2 + H(+) = 5-hydroxyisourate + NAD(+) + H2O. It participates in purine metabolism; urate degradation. Functionally, catalyzes the hydroxylation of uric acid to 5-hydroxyisourate. This Klebsiella oxytoca protein is FAD-dependent urate hydroxylase (hpxO).